The following is a 300-amino-acid chain: Cell shape-determining protein MreC (300 aa).

The Cytoplasmic segment spans residues 1-17 (MARDRTRPEDFTRPLRR). The chain crosses the membrane as a helical span at residues 18-38 (ILVGGLVLLLLGIFLIWRIDS). Residues 39 to 300 (PRVEQFRAAL…APAAVEGADG (262 aa)) are Periplasmic-facing. A coiled-coil region spans residues 74–117 (QSYTRIYEQNQELRRELQQMKAWKEAALQLEQKNARLLDLNQVR). A disordered region spans residues 277-300 (SDPGKLVAEPPAPPAPAAVEGADG).

This sequence belongs to the MreC family.

The protein localises to the cell inner membrane. Functionally, involved in formation and maintenance of cell shape. This chain is Cell shape-determining protein MreC, found in Cereibacter sphaeroides (Rhodobacter sphaeroides).